The primary structure comprises 144 residues: HTH-type transcriptional repressor NsrR (144 aa).

An HTH rrf2-type domain is found at 2–129; the sequence is QLTSFTDYGL…DKHTLLSLID (128 aa). The segment at residues 28-51 is a DNA-binding region (H-T-H motif); sequence ISKVTEVYGVSRNHMVKIINKLGQ. Residues Cys91, Cys96, and Cys102 each coordinate [2Fe-2S] cluster.

Requires [2Fe-2S] cluster as cofactor.

Its function is as follows. Nitric oxide-sensitive repressor of genes involved in protecting the cell against nitrosative stress. May require iron for activity. The protein is HTH-type transcriptional repressor NsrR of Photobacterium profundum (strain SS9).